Reading from the N-terminus, the 285-residue chain is MEQRNRLGALGYLLPLLLHSLLLFVADATFTEVPKDVTVREGDDIEMPCAFRASGATSYSLEIQWWYLKEPPRELLHELALSVPGARSKVTNKDATKISTVRVQGNDISHRLRLSAVRLQDEGVYECRVSDYSDDDTQEHKAQALLRVLSRFAPPNMQAAEAVSHIQSSGPRRHGASSAVSSNNAGAAVRTTSETSHDDKNPPPGSPPAGSGVPEAAAAAASATHTATTTAAAAAASSSASPPSGQAVLLRQRHGSGTGPGYSADPLLSLLLLALHKFLHPLLGH.

Residues 1 to 28 (MEQRNRLGALGYLLPLLLHSLLLFVADA) form the signal peptide. The region spanning 29-143 (TFTEVPKDVT…DDDTQEHKAQ (115 aa)) is the Ig-like V-type domain. Residues 29–263 (TFTEVPKDVT…HGSGTGPGYS (235 aa)) are Extracellular-facing. Cys49 and Cys127 are oxidised to a cystine. The disordered stretch occupies residues 160–225 (AEAVSHIQSS…AAAAAASATH (66 aa)). Composition is skewed to low complexity over residues 176 to 189 (ASSAVSSNNAGAAV) and 208 to 225 (PAGSGVPEAAAAAASATH). The helical transmembrane segment at 264–284 (ADPLLSLLLLALHKFLHPLLG) threads the bilayer. A topological domain (cytoplasmic) is located at residue His285.

The protein resides in the membrane. This chain is V-set and transmembrane domain-containing protein 2B (Vstm2b), found in Mus musculus (Mouse).